The primary structure comprises 356 residues: UDP-N-acetylglucosamine--N-acetylmuramyl-(pentapeptide) pyrophosphoryl-undecaprenol N-acetylglucosamine transferase (356 aa).

Residues 12–14, Asn124, Arg163, Ser188, Ile242, 261–266, and Gln287 each bind UDP-N-acetyl-alpha-D-glucosamine; these read TGG and ALTVSE.

The protein belongs to the glycosyltransferase 28 family. MurG subfamily.

Its subcellular location is the cell inner membrane. The enzyme catalyses di-trans,octa-cis-undecaprenyl diphospho-N-acetyl-alpha-D-muramoyl-L-alanyl-D-glutamyl-meso-2,6-diaminopimeloyl-D-alanyl-D-alanine + UDP-N-acetyl-alpha-D-glucosamine = di-trans,octa-cis-undecaprenyl diphospho-[N-acetyl-alpha-D-glucosaminyl-(1-&gt;4)]-N-acetyl-alpha-D-muramoyl-L-alanyl-D-glutamyl-meso-2,6-diaminopimeloyl-D-alanyl-D-alanine + UDP + H(+). It participates in cell wall biogenesis; peptidoglycan biosynthesis. Cell wall formation. Catalyzes the transfer of a GlcNAc subunit on undecaprenyl-pyrophosphoryl-MurNAc-pentapeptide (lipid intermediate I) to form undecaprenyl-pyrophosphoryl-MurNAc-(pentapeptide)GlcNAc (lipid intermediate II). This chain is UDP-N-acetylglucosamine--N-acetylmuramyl-(pentapeptide) pyrophosphoryl-undecaprenol N-acetylglucosamine transferase, found in Pseudomonas fluorescens (strain ATCC BAA-477 / NRRL B-23932 / Pf-5).